The following is a 193-amino-acid chain: DNA damage-inducible transcript 4-like protein (193 aa).

This sequence belongs to the DDIT4 family. As to expression, expressed in heart, skeletal muscle and testis.

The protein resides in the cytoplasm. In terms of biological role, inhibits cell growth by regulating the TOR signaling pathway upstream of the TSC1-TSC2 complex and downstream of AKT1. The sequence is that of DNA damage-inducible transcript 4-like protein (Ddit4l) from Rattus norvegicus (Rat).